The following is a 154-amino-acid chain: Endoribonuclease YbeY (154 aa).

Residues histidine 114, histidine 118, and histidine 124 each contribute to the Zn(2+) site.

The protein belongs to the endoribonuclease YbeY family. Requires Zn(2+) as cofactor.

Its subcellular location is the cytoplasm. Functionally, single strand-specific metallo-endoribonuclease involved in late-stage 70S ribosome quality control and in maturation of the 3' terminus of the 16S rRNA. This is Endoribonuclease YbeY from Haemophilus influenzae (strain ATCC 51907 / DSM 11121 / KW20 / Rd).